The primary structure comprises 197 residues: ATP-dependent Clp protease proteolytic subunit 2 (197 aa).

S96 acts as the Nucleophile in catalysis. H121 is a catalytic residue.

Belongs to the peptidase S14 family. As to quaternary structure, fourteen ClpP subunits assemble into 2 heptameric rings which stack back to back to give a disk-like structure with a central cavity, resembling the structure of eukaryotic proteasomes.

The protein localises to the cytoplasm. It catalyses the reaction Hydrolysis of proteins to small peptides in the presence of ATP and magnesium. alpha-casein is the usual test substrate. In the absence of ATP, only oligopeptides shorter than five residues are hydrolyzed (such as succinyl-Leu-Tyr-|-NHMec, and Leu-Tyr-Leu-|-Tyr-Trp, in which cleavage of the -Tyr-|-Leu- and -Tyr-|-Trp bonds also occurs).. In terms of biological role, cleaves peptides in various proteins in a process that requires ATP hydrolysis. Has a chymotrypsin-like activity. Plays a major role in the degradation of misfolded proteins. This is ATP-dependent Clp protease proteolytic subunit 2 from Synechococcus sp. (strain CC9605).